The following is a 459-amino-acid chain: MKDIKTYSNKNILVLGLGKSGFAVSELLLKLGAKLTLNDKADLDKNEKAQELKAKGVRVIGGHHPVDLLEKEHFDYLVKNPGIPYENPMVKKAEELNIPIITEPEIALSCSDAPYVCVTGSNGKTTTVMLTQRILDHHLQKSGHHAYAVGNIGVPISEVVPKATKDDILVVEISSFQLLGVTDIDPKVAAIVDIYNNVHLDYHKTFENYVNAKLNVTRTQNSDDYFIANYDQKDILAKEKEVTPAKMQTFSETDSSADYFIGDEYLESQNEKIMKIVDIKLPGIHNLQNSLVAIAISKVMGADNDDIAAVLSTFTGAKHRLQYVTTLDGRKVYNDSKSTNIEAATVAIPSFKEPEVLIAGGLDRGFLFDDLVPLFKKHVKSIVLYGETKYLLADAARKAGIKDIVIVNTLQEAVPRAYELSEPGDVILFSPACASWDQFRTFEDRGDYFVKFVKELKTK.

120–126 provides a ligand contact to ATP; that stretch reads GSNGKTT.

This sequence belongs to the MurCDEF family.

Its subcellular location is the cytoplasm. It carries out the reaction UDP-N-acetyl-alpha-D-muramoyl-L-alanine + D-glutamate + ATP = UDP-N-acetyl-alpha-D-muramoyl-L-alanyl-D-glutamate + ADP + phosphate + H(+). The protein operates within cell wall biogenesis; peptidoglycan biosynthesis. Cell wall formation. Catalyzes the addition of glutamate to the nucleotide precursor UDP-N-acetylmuramoyl-L-alanine (UMA). This Lactobacillus helveticus (strain DPC 4571) protein is UDP-N-acetylmuramoylalanine--D-glutamate ligase.